Here is a 174-residue protein sequence, read N- to C-terminus: Transcriptional repressor NrdR (174 aa).

A zinc finger lies at 3–34 (CPFCQHSDTRVIDSRVSEDGTTIRRRRECEAC). Residues 49 to 139 (PTVVKSDGGR…VYRSFQDVAD (91 aa)) form the ATP-cone domain.

It belongs to the NrdR family. The cofactor is Zn(2+).

In terms of biological role, negatively regulates transcription of bacterial ribonucleotide reductase nrd genes and operons by binding to NrdR-boxes. In Xanthomonas oryzae pv. oryzae (strain MAFF 311018), this protein is Transcriptional repressor NrdR.